The chain runs to 124 residues: Large ribosomal subunit protein bL12c (124 aa).

It belongs to the bacterial ribosomal protein bL12 family. Homodimer. Part of the ribosomal stalk of the 50S ribosomal subunit. Forms a multimeric L10(L12)X complex, where L10 forms an elongated spine to which 2 to 4 L12 dimers bind in a sequential fashion. Binds GTP-bound translation factors.

Its subcellular location is the plastid. The protein localises to the chloroplast. In terms of biological role, forms part of the ribosomal stalk which helps the ribosome interact with GTP-bound translation factors. Is thus essential for accurate translation. This is Large ribosomal subunit protein bL12c from Cyanidioschyzon merolae (strain NIES-3377 / 10D) (Unicellular red alga).